The sequence spans 474 residues: tRNA-2-methylthio-N(6)-dimethylallyladenosine synthase (474 aa).

Residues 3 to 120 (KKLHIKTWGC…LPDMIDQVRR (118 aa)) form the MTTase N-terminal domain. The [4Fe-4S] cluster site is built by Cys-12, Cys-49, Cys-83, Cys-157, Cys-161, and Cys-164. In terms of domain architecture, Radical SAM core spans 143–375 (RAEGPTAFVS…QDRITQQAMR (233 aa)). The 64-residue stretch at 378-441 (RHMMGTVQRI…TNSLRGKFIR (64 aa)) folds into the TRAM domain.

It belongs to the methylthiotransferase family. MiaB subfamily. As to quaternary structure, monomer. The cofactor is [4Fe-4S] cluster.

The protein localises to the cytoplasm. It carries out the reaction N(6)-dimethylallyladenosine(37) in tRNA + (sulfur carrier)-SH + AH2 + 2 S-adenosyl-L-methionine = 2-methylsulfanyl-N(6)-dimethylallyladenosine(37) in tRNA + (sulfur carrier)-H + 5'-deoxyadenosine + L-methionine + A + S-adenosyl-L-homocysteine + 2 H(+). Its function is as follows. Catalyzes the methylthiolation of N6-(dimethylallyl)adenosine (i(6)A), leading to the formation of 2-methylthio-N6-(dimethylallyl)adenosine (ms(2)i(6)A) at position 37 in tRNAs that read codons beginning with uridine. The protein is tRNA-2-methylthio-N(6)-dimethylallyladenosine synthase of Shewanella sp. (strain ANA-3).